We begin with the raw amino-acid sequence, 190 residues long: Peptide methionine sulfoxide reductase A2-2 (190 aa).

Residues 1–20 form a disordered region; that stretch reads MSNDTGADGGAANPDLGPDA. Over residues 10–20 the composition is skewed to low complexity; that stretch reads GAANPDLGPDA.

This sequence belongs to the MsrA Met sulfoxide reductase family.

Its subcellular location is the cytoplasm. It is found in the cytosol. It carries out the reaction L-methionyl-[protein] + [thioredoxin]-disulfide + H2O = L-methionyl-(S)-S-oxide-[protein] + [thioredoxin]-dithiol. The catalysed reaction is [thioredoxin]-disulfide + L-methionine + H2O = L-methionine (S)-S-oxide + [thioredoxin]-dithiol. Functionally, catalyzes the reduction of methionine sulfoxide (MetSO) to methionine in proteins. Plays a protective role against oxidative stress by restoring activity to proteins that have been inactivated by methionine oxidation. MSRA family specifically reduces the MetSO S-enantiomer. This Oryza sativa subsp. japonica (Rice) protein is Peptide methionine sulfoxide reductase A2-2 (MSRA2-2).